Reading from the N-terminus, the 257-residue chain is Imidazole glycerol phosphate synthase subunit HisF (257 aa).

Active-site residues include Asp-11 and Asp-130.

Belongs to the HisA/HisF family. Heterodimer of HisH and HisF.

It is found in the cytoplasm. The catalysed reaction is 5-[(5-phospho-1-deoxy-D-ribulos-1-ylimino)methylamino]-1-(5-phospho-beta-D-ribosyl)imidazole-4-carboxamide + L-glutamine = D-erythro-1-(imidazol-4-yl)glycerol 3-phosphate + 5-amino-1-(5-phospho-beta-D-ribosyl)imidazole-4-carboxamide + L-glutamate + H(+). It functions in the pathway amino-acid biosynthesis; L-histidine biosynthesis; L-histidine from 5-phospho-alpha-D-ribose 1-diphosphate: step 5/9. Functionally, IGPS catalyzes the conversion of PRFAR and glutamine to IGP, AICAR and glutamate. The HisF subunit catalyzes the cyclization activity that produces IGP and AICAR from PRFAR using the ammonia provided by the HisH subunit. The sequence is that of Imidazole glycerol phosphate synthase subunit HisF from Shewanella frigidimarina (strain NCIMB 400).